Consider the following 215-residue polypeptide: Protein GET1 (215 aa).

At 1 to 4 (MINL) the chain is on the lumenal side. Residues 5-24 (ALVIFLCTLLNQIVSWVGKS) form a helical membrane-spanning segment. Residues 25-108 (VLQEIAFTAY…SFSKKFSTLL (84 aa)) are Cytoplasmic-facing. Residues 73–94 (AKLRRKLDKGLADLEKTNNTLS) adopt a coiled-coil conformation. Residues 109-129 (WLMTTGAQFLLSWWFRKQPIF) traverse the membrane as a helical segment. Residues 130-153 (WLPEGWVPYPVAWLLSFPSAPIGS) lie on the Lumenal side of the membrane. Residues 154–170 (VSSGAWGAICRRVLSTL) traverse the membrane as a helical segment. The Cytoplasmic segment spans residues 171 to 215 (QEIIQSLLAPSPAATGPVPTGPSSAKNDQPEAKIEALALEHEKLD). Residues 182–202 (PAATGPVPTGPSSAKNDQPEA) form a disordered region.

It belongs to the WRB/GET1 family. Interacts with GET3.

The protein localises to the endoplasmic reticulum membrane. Its function is as follows. Required for the post-translational delivery of tail-anchored (TA) proteins to the endoplasmic reticulum. Acts as a membrane receptor for soluble GET3, which recognizes and selectively binds the transmembrane domain of TA proteins in the cytosol. This chain is Protein GET1, found in Cryptococcus neoformans var. neoformans serotype D (strain JEC21 / ATCC MYA-565) (Filobasidiella neoformans).